The chain runs to 600 residues: Aspartate--tRNA(Asp/Asn) ligase (600 aa).

Glu-174 contacts L-aspartate. Residues 198 to 201 form an aspartate region; that stretch reads QLFK. An L-aspartate-binding site is contributed by Arg-220. Residues 220–222 and Gln-229 each bind ATP; that span reads RDE. His-457 serves as a coordination point for L-aspartate. Glu-491 serves as a coordination point for ATP. L-aspartate is bound at residue Arg-498. 543–546 is an ATP binding site; the sequence is GLDR.

This sequence belongs to the class-II aminoacyl-tRNA synthetase family. Type 1 subfamily. In terms of assembly, homodimer.

The protein localises to the cytoplasm. The catalysed reaction is tRNA(Asx) + L-aspartate + ATP = L-aspartyl-tRNA(Asx) + AMP + diphosphate. In terms of biological role, aspartyl-tRNA synthetase with relaxed tRNA specificity since it is able to aspartylate not only its cognate tRNA(Asp) but also tRNA(Asn). Reaction proceeds in two steps: L-aspartate is first activated by ATP to form Asp-AMP and then transferred to the acceptor end of tRNA(Asp/Asn). The protein is Aspartate--tRNA(Asp/Asn) ligase of Burkholderia lata (strain ATCC 17760 / DSM 23089 / LMG 22485 / NCIMB 9086 / R18194 / 383).